The primary structure comprises 148 residues: Small ribosomal subunit protein eS19 (148 aa).

Residues 79-90 show a composition bias toward basic residues; that stretch reads HGSTKNRGSRPA. Disordered regions lie at residues 79–98 and 116–148; these read HGST…ASGA and DEEK…EDDE. The span at 130–140 shows a compositional bias: basic and acidic residues; that stretch reads RDLDRIAKTTV.

Belongs to the eukaryotic ribosomal protein eS19 family.

This chain is Small ribosomal subunit protein eS19 (rps19), found in Emericella nidulans (strain FGSC A4 / ATCC 38163 / CBS 112.46 / NRRL 194 / M139) (Aspergillus nidulans).